Reading from the N-terminus, the 819-residue chain is Zinc finger protein 658B (819 aa).

A C2H2-type 1; degenerate zinc finger spans residues 141-166 (YLSDEHGKCRKSFYWKAHLIQHERPH). C2H2-type zinc fingers lie at residues 200-222 (YECN…LRIH), 278-300 (YECI…QRIH), 306-328 (YECV…QRVH), 334-356 (YECN…QRIH), 362-384 (YECS…HRIH), 390-412 (YECN…QRIH), 418-440 (YECN…QRIH), 446-468 (YECS…QRIH), 474-496 (YKCN…QNIH), 502-524 (YECS…RRIH), 530-552 (YECS…ERIH), 558-580 (YECN…QRIH), 586-608 (YECN…QRIH), and 614-636 (YECN…HRIH). A C2H2-type 16; degenerate zinc finger spans residues 642–664 (YECNDCGKTFSKTSHLRAHLRTR). C2H2-type zinc fingers lie at residues 670–692 (YECS…QRVH), 698–720 (YECN…QRIH), 726–748 (YECN…QRIH), 754–776 (YECN…QRIH), and 782–805 (YECD…TRMH).

This sequence belongs to the krueppel C2H2-type zinc-finger protein family.

Its subcellular location is the nucleus. Functionally, may be involved in transcriptional regulation. The protein is Zinc finger protein 658B (ZNF658B) of Homo sapiens (Human).